The primary structure comprises 142 residues: Nucleoside diphosphate kinase (142 aa).

The ATP site is built by Lys-11, Phe-59, Arg-87, Thr-93, Arg-104, and Asn-114. His-117 (pros-phosphohistidine intermediate) is an active-site residue.

Belongs to the NDK family. Homotetramer. Mg(2+) is required as a cofactor.

It is found in the cytoplasm. The enzyme catalyses a 2'-deoxyribonucleoside 5'-diphosphate + ATP = a 2'-deoxyribonucleoside 5'-triphosphate + ADP. It carries out the reaction a ribonucleoside 5'-diphosphate + ATP = a ribonucleoside 5'-triphosphate + ADP. Its function is as follows. Major role in the synthesis of nucleoside triphosphates other than ATP. The ATP gamma phosphate is transferred to the NDP beta phosphate via a ping-pong mechanism, using a phosphorylated active-site intermediate. The sequence is that of Nucleoside diphosphate kinase from Marinobacter nauticus (strain ATCC 700491 / DSM 11845 / VT8) (Marinobacter aquaeolei).